Reading from the N-terminus, the 473-residue chain is tRNA modification GTPase MnmE (473 aa).

R30, E95, and R134 together coordinate (6S)-5-formyl-5,6,7,8-tetrahydrofolate. The TrmE-type G domain maps to 230-394 (GVAAVIAGRP…LKSTMAGMVE (165 aa)). Residues 240-245 (NAGKST), 259-265 (SHMPGTT), and 284-287 (DTAG) each bind GTP. Residues S244 and T265 each coordinate Mg(2+). Residue K473 participates in (6S)-5-formyl-5,6,7,8-tetrahydrofolate binding.

This sequence belongs to the TRAFAC class TrmE-Era-EngA-EngB-Septin-like GTPase superfamily. TrmE GTPase family. As to quaternary structure, homodimer. Heterotetramer of two MnmE and two MnmG subunits. The cofactor is K(+).

The protein localises to the cytoplasm. Exhibits a very high intrinsic GTPase hydrolysis rate. Involved in the addition of a carboxymethylaminomethyl (cmnm) group at the wobble position (U34) of certain tRNAs, forming tRNA-cmnm(5)s(2)U34. The chain is tRNA modification GTPase MnmE from Chlorobium phaeovibrioides (strain DSM 265 / 1930) (Prosthecochloris vibrioformis (strain DSM 265)).